The primary structure comprises 148 residues: Cystatin-C (148 aa).

The first 30 residues, 1-30 (MVGSPRAPLLLLASLIVALALALAVSPAAA), serve as a signal peptide directing secretion. Q31 is modified (pyrrolidone carboxylic acid). A Secondary area of contact motif is present at residues 84–88 (QVVSG). 2 disulfide bridges follow: C102–C112 and C126–C146.

Its subcellular location is the secreted. Functionally, this is a thiol proteinase inhibitor. The sequence is that of Cystatin-C (CST3) from Bos taurus (Bovine).